Reading from the N-terminus, the 92-residue chain is Acylphosphatase (92 aa).

The Acylphosphatase-like domain occupies 7–92 (KTRCTISGRV…DPAPAEFSVG (86 aa)). Active-site residues include Arg22 and Asn40.

This sequence belongs to the acylphosphatase family.

It catalyses the reaction an acyl phosphate + H2O = a carboxylate + phosphate + H(+). This is Acylphosphatase (acyP) from Halorhodospira halophila (strain DSM 244 / SL1) (Ectothiorhodospira halophila (strain DSM 244 / SL1)).